A 246-amino-acid polypeptide reads, in one-letter code: 3-deoxy-manno-octulosonate cytidylyltransferase (246 aa).

Belongs to the KdsB family.

It localises to the cytoplasm. It carries out the reaction 3-deoxy-alpha-D-manno-oct-2-ulosonate + CTP = CMP-3-deoxy-beta-D-manno-octulosonate + diphosphate. The protein operates within nucleotide-sugar biosynthesis; CMP-3-deoxy-D-manno-octulosonate biosynthesis; CMP-3-deoxy-D-manno-octulosonate from 3-deoxy-D-manno-octulosonate and CTP: step 1/1. It functions in the pathway bacterial outer membrane biogenesis; lipopolysaccharide biosynthesis. Functionally, activates KDO (a required 8-carbon sugar) for incorporation into bacterial lipopolysaccharide in Gram-negative bacteria. This chain is 3-deoxy-manno-octulosonate cytidylyltransferase, found in Bradyrhizobium diazoefficiens (strain JCM 10833 / BCRC 13528 / IAM 13628 / NBRC 14792 / USDA 110).